The primary structure comprises 173 residues: Crossover junction endodeoxyribonuclease RuvC (173 aa).

Residues aspartate 8, glutamate 67, and aspartate 139 contribute to the active site. The Mg(2+) site is built by aspartate 8, glutamate 67, and aspartate 139.

This sequence belongs to the RuvC family. As to quaternary structure, homodimer which binds Holliday junction (HJ) DNA. The HJ becomes 2-fold symmetrical on binding to RuvC with unstacked arms; it has a different conformation from HJ DNA in complex with RuvA. In the full resolvosome a probable DNA-RuvA(4)-RuvB(12)-RuvC(2) complex forms which resolves the HJ. Mg(2+) serves as cofactor.

The protein resides in the cytoplasm. The catalysed reaction is Endonucleolytic cleavage at a junction such as a reciprocal single-stranded crossover between two homologous DNA duplexes (Holliday junction).. In terms of biological role, the RuvA-RuvB-RuvC complex processes Holliday junction (HJ) DNA during genetic recombination and DNA repair. Endonuclease that resolves HJ intermediates. Cleaves cruciform DNA by making single-stranded nicks across the HJ at symmetrical positions within the homologous arms, yielding a 5'-phosphate and a 3'-hydroxyl group; requires a central core of homology in the junction. The consensus cleavage sequence is 5'-(A/T)TT(C/G)-3'. Cleavage occurs on the 3'-side of the TT dinucleotide at the point of strand exchange. HJ branch migration catalyzed by RuvA-RuvB allows RuvC to scan DNA until it finds its consensus sequence, where it cleaves and resolves the cruciform DNA. This chain is Crossover junction endodeoxyribonuclease RuvC, found in Shigella flexneri serotype 5b (strain 8401).